The chain runs to 412 residues: 23S rRNA (uracil(747)-C(5))-methyltransferase (412 aa).

The [4Fe-4S] cluster site is built by Cys-63, Cys-69, Cys-72, and Cys-139. Positions 255, 281, 302, and 343 each coordinate S-adenosyl-L-methionine. Cys-369 functions as the Nucleophile in the catalytic mechanism.

Belongs to the class I-like SAM-binding methyltransferase superfamily. RNA M5U methyltransferase family.

The enzyme catalyses uridine(747) in 23S rRNA + S-adenosyl-L-methionine = 5-methyluridine(747) in 23S rRNA + S-adenosyl-L-homocysteine + H(+). In terms of biological role, catalyzes the formation of 5-methyl-uridine at position equivalent to 747 (m5U747) in 23S rRNA. This is 23S rRNA (uracil(747)-C(5))-methyltransferase from Pyrococcus horikoshii (strain ATCC 700860 / DSM 12428 / JCM 9974 / NBRC 100139 / OT-3).